A 252-amino-acid polypeptide reads, in one-letter code: Imidazole glycerol phosphate synthase subunit HisF (252 aa).

Catalysis depends on residues D11 and D130.

The protein belongs to the HisA/HisF family. In terms of assembly, heterodimer of HisH and HisF.

Its subcellular location is the cytoplasm. It carries out the reaction 5-[(5-phospho-1-deoxy-D-ribulos-1-ylimino)methylamino]-1-(5-phospho-beta-D-ribosyl)imidazole-4-carboxamide + L-glutamine = D-erythro-1-(imidazol-4-yl)glycerol 3-phosphate + 5-amino-1-(5-phospho-beta-D-ribosyl)imidazole-4-carboxamide + L-glutamate + H(+). It participates in amino-acid biosynthesis; L-histidine biosynthesis; L-histidine from 5-phospho-alpha-D-ribose 1-diphosphate: step 5/9. Its function is as follows. IGPS catalyzes the conversion of PRFAR and glutamine to IGP, AICAR and glutamate. The HisF subunit catalyzes the cyclization activity that produces IGP and AICAR from PRFAR using the ammonia provided by the HisH subunit. This Staphylococcus epidermidis (strain ATCC 12228 / FDA PCI 1200) protein is Imidazole glycerol phosphate synthase subunit HisF.